Here is a 383-residue protein sequence, read N- to C-terminus: Succinyl-diaminopimelate desuccinylase (383 aa).

H73 provides a ligand contact to Zn(2+). The active site involves D75. D107 contributes to the Zn(2+) binding site. E141 serves as the catalytic Proton acceptor. E142, E170, and H356 together coordinate Zn(2+).

Belongs to the peptidase M20A family. DapE subfamily. In terms of assembly, homodimer. Zn(2+) serves as cofactor. Requires Co(2+) as cofactor.

The catalysed reaction is N-succinyl-(2S,6S)-2,6-diaminopimelate + H2O = (2S,6S)-2,6-diaminopimelate + succinate. Its pathway is amino-acid biosynthesis; L-lysine biosynthesis via DAP pathway; LL-2,6-diaminopimelate from (S)-tetrahydrodipicolinate (succinylase route): step 3/3. In terms of biological role, catalyzes the hydrolysis of N-succinyl-L,L-diaminopimelic acid (SDAP), forming succinate and LL-2,6-diaminopimelate (DAP), an intermediate involved in the bacterial biosynthesis of lysine and meso-diaminopimelic acid, an essential component of bacterial cell walls. This Pseudomonas putida (strain GB-1) protein is Succinyl-diaminopimelate desuccinylase.